We begin with the raw amino-acid sequence, 206 residues long: Small ribosomal subunit protein uS5 (206 aa).

The segment at 1 to 42 is disordered; that stretch reads MENKTEVVVAENANNQTQPERKKFDRKPNRRPQGPKQFQKDD. The S5 DRBM domain occupies 43–106; the sequence is FEEKVVTIRR…KEAKKNLIRV (64 aa).

It belongs to the universal ribosomal protein uS5 family. Part of the 30S ribosomal subunit. Contacts proteins S4 and S8.

Its function is as follows. With S4 and S12 plays an important role in translational accuracy. Functionally, located at the back of the 30S subunit body where it stabilizes the conformation of the head with respect to the body. The protein is Small ribosomal subunit protein uS5 of Mesoplasma florum (strain ATCC 33453 / NBRC 100688 / NCTC 11704 / L1) (Acholeplasma florum).